A 185-amino-acid chain; its full sequence is Dihydrofolate reductase (185 aa).

A DHFR domain is found at 5-184 (KLNLIAAACD…ISYYFRVYKK (180 aa)). Residues alanine 11 and 17 to 23 (GIGVNGA) each bind NADP(+). 31–36 (EMAYFT) lines the substrate pocket. 55–57 (RRT) contacts NADP(+). Residue arginine 71 participates in substrate binding. Residues 77-79 (THN) and 117-124 (GGSSIYRA) each bind NADP(+).

It belongs to the dihydrofolate reductase family.

It carries out the reaction (6S)-5,6,7,8-tetrahydrofolate + NADP(+) = 7,8-dihydrofolate + NADPH + H(+). It functions in the pathway cofactor biosynthesis; tetrahydrofolate biosynthesis; 5,6,7,8-tetrahydrofolate from 7,8-dihydrofolate: step 1/1. Its activity is regulated as follows. Activated by dithiothreitol and p-chloromercuribenzoate. Inhibited by trimethoprim, methotrexate, sodium tetrathionate and hydroxymercuribenzoate. Key enzyme in folate metabolism. Catalyzes an essential reaction for de novo glycine and purine synthesis, and for DNA precursor synthesis. The sequence is that of Dihydrofolate reductase (DHFR) from Heliothis virescens (Tobacco budworm moth).